Here is a 300-residue protein sequence, read N- to C-terminus: Quinolinate synthase (300 aa).

Iminosuccinate contacts are provided by His21 and Ser38. Position 83 (Cys83) interacts with [4Fe-4S] cluster. Iminosuccinate is bound by residues Tyr109 to Asn111 and Ser126. Cys170 contributes to the [4Fe-4S] cluster binding site. Iminosuccinate-binding positions include His196–Glu198 and Thr213. Residue Cys256 participates in [4Fe-4S] cluster binding.

This sequence belongs to the quinolinate synthase family. Type 2 subfamily. As to quaternary structure, monomer. Homodimer. Requires [4Fe-4S] cluster as cofactor.

Its subcellular location is the cytoplasm. It catalyses the reaction iminosuccinate + dihydroxyacetone phosphate = quinolinate + phosphate + 2 H2O + H(+). It participates in cofactor biosynthesis; NAD(+) biosynthesis; quinolinate from iminoaspartate: step 1/1. In terms of biological role, catalyzes the condensation of iminoaspartate with dihydroxyacetone phosphate to form quinolinate. The protein is Quinolinate synthase of Pyrococcus horikoshii (strain ATCC 700860 / DSM 12428 / JCM 9974 / NBRC 100139 / OT-3).